The sequence spans 333 residues: Transcription factor MYB36 (333 aa).

HTH myb-type domains lie at 9–62 (KANV…LNYL) and 63–117 (RPNI…KKKL). 2 consecutive DNA-binding regions (H-T-H motif) follow at residues 38–62 (WIALPQKIGLKRCGKSCRLRWLNYL) and 90–113 (WSIIAAQLPGRTDNDIKNYWNTKL). Positions 119-150 (GRQKQMNRQDSITDSTENNLSNNNNNKSPQNL) are disordered. Polar residues predominate over residues 122–135 (KQMNRQDSITDSTE). Positions 136–150 (NNLSNNNNNKSPQNL) are enriched in low complexity.

In terms of tissue distribution, expressed in leaves, roots (endodermis-specific) and seedlings.

Its subcellular location is the nucleus. Functionally, transcription factors that activates genes required for endodermal differentiation but represses genes involved in proliferative divisions, thus regulating the transition from proliferation to differentiation in root endodermis. Required for Casparian strip formation by positively regulating the expression of the Casparian strip genes CASP1, PER64 and ESB1 and other endodermis-specific genes, thus triggering correct localized lignin biosynthesis in root endodermis and subsequently regulating global ion homeostasis. In Arabidopsis thaliana (Mouse-ear cress), this protein is Transcription factor MYB36.